We begin with the raw amino-acid sequence, 629 residues long: DNA-directed RNA polymerase subunit beta' (629 aa).

Residues Cys-70, Cys-72, Cys-85, and Cys-88 each coordinate Zn(2+). The Mg(2+) site is built by Asp-472, Asp-474, and Asp-476.

This sequence belongs to the RNA polymerase beta' chain family. RpoC1 subfamily. In plastids the minimal PEP RNA polymerase catalytic core is composed of four subunits: alpha, beta, beta', and beta''. When a (nuclear-encoded) sigma factor is associated with the core the holoenzyme is formed, which can initiate transcription. It depends on Mg(2+) as a cofactor. Zn(2+) serves as cofactor.

It localises to the plastid. The protein resides in the chloroplast. It carries out the reaction RNA(n) + a ribonucleoside 5'-triphosphate = RNA(n+1) + diphosphate. DNA-dependent RNA polymerase catalyzes the transcription of DNA into RNA using the four ribonucleoside triphosphates as substrates. The polypeptide is DNA-directed RNA polymerase subunit beta' (Pyropia yezoensis (Susabi-nori)).